The following is a 221-amino-acid chain: Phosphoribosylformylglycinamidine synthase subunit PurQ (221 aa).

In terms of domain architecture, Glutamine amidotransferase type-1 spans 2–221 (KTAVIQFPGS…VFESLKTVKK (220 aa)). Cys-87 (nucleophile) is an active-site residue. Active-site residues include His-195 and Glu-197.

As to quaternary structure, part of the FGAM synthase complex composed of 1 PurL, 1 PurQ and 2 PurS subunits.

Its subcellular location is the cytoplasm. It catalyses the reaction N(2)-formyl-N(1)-(5-phospho-beta-D-ribosyl)glycinamide + L-glutamine + ATP + H2O = 2-formamido-N(1)-(5-O-phospho-beta-D-ribosyl)acetamidine + L-glutamate + ADP + phosphate + H(+). It carries out the reaction L-glutamine + H2O = L-glutamate + NH4(+). It functions in the pathway purine metabolism; IMP biosynthesis via de novo pathway; 5-amino-1-(5-phospho-D-ribosyl)imidazole from N(2)-formyl-N(1)-(5-phospho-D-ribosyl)glycinamide: step 1/2. Functionally, part of the phosphoribosylformylglycinamidine synthase complex involved in the purines biosynthetic pathway. Catalyzes the ATP-dependent conversion of formylglycinamide ribonucleotide (FGAR) and glutamine to yield formylglycinamidine ribonucleotide (FGAM) and glutamate. The FGAM synthase complex is composed of three subunits. PurQ produces an ammonia molecule by converting glutamine to glutamate. PurL transfers the ammonia molecule to FGAR to form FGAM in an ATP-dependent manner. PurS interacts with PurQ and PurL and is thought to assist in the transfer of the ammonia molecule from PurQ to PurL. The sequence is that of Phosphoribosylformylglycinamidine synthase subunit PurQ from Deinococcus radiodurans (strain ATCC 13939 / DSM 20539 / JCM 16871 / CCUG 27074 / LMG 4051 / NBRC 15346 / NCIMB 9279 / VKM B-1422 / R1).